A 354-amino-acid polypeptide reads, in one-letter code: Uroporphyrinogen decarboxylase (354 aa).

Residues 27–31 (RQAGR), Asp-77, Tyr-154, Thr-209, and His-327 each bind substrate.

The protein belongs to the uroporphyrinogen decarboxylase family. In terms of assembly, homodimer.

The protein resides in the cytoplasm. It carries out the reaction uroporphyrinogen III + 4 H(+) = coproporphyrinogen III + 4 CO2. Its pathway is porphyrin-containing compound metabolism; protoporphyrin-IX biosynthesis; coproporphyrinogen-III from 5-aminolevulinate: step 4/4. In terms of biological role, catalyzes the decarboxylation of four acetate groups of uroporphyrinogen-III to yield coproporphyrinogen-III. This is Uroporphyrinogen decarboxylase from Salmonella paratyphi A (strain ATCC 9150 / SARB42).